Reading from the N-terminus, the 644-residue chain is Zinc transporter ZIP4 (644 aa).

The first 27 residues, 1–27, serve as a signal peptide directing secretion; that stretch reads MAILAWLEPRPLLAVLVLVLTMRMAQP. The Extracellular portion of the chain corresponds to 28-323; that stretch reads AHLLTLLSSG…QNQLSQAEKY (296 aa). 3 disulfide bridges follow: Cys59/Cys64, Cys67/Cys103, and Cys153/Cys188. The tract at residues 231–259 is disordered; sequence TETHSDHHHQEKRVNRQGPTPLTAPNSSS. A compositionally biased stretch (basic and acidic residues) spans 233–244; the sequence is THSDHHHQEKRV. Polar residues predominate over residues 247 to 259; sequence QGPTPLTAPNSSS. Residues Cys266 and Cys305 are joined by a disulfide bond. The chain crosses the membrane as a helical span at residues 324-344; it reads LYGSLATLLICLCSTFGLLLL. Residues 345–355 are Cytoplasmic-facing; that stretch reads TCAACSTAAHY. A helical membrane pass occupies residues 356–376; sequence VIQTFLGMAVGALTGDALLHL. Topologically, residues 377–404 are extracellular; it reads TPKVLGLHQHGGDSEHRADSHGPQTTWR. A helical membrane pass occupies residues 405–425; the sequence is LVVALSGLYVFFLFEKLCDLL. Topologically, residues 426–495 are cytoplasmic; it reads LPQDPEDRKG…KSPELRLLPY (70 aa). The Essential for SLC39A4 endocytosis motif lies at 449–451; that stretch reads LQL. A compositionally biased stretch (basic and acidic residues) spans 456-467; that stretch reads LRPPKQPHEGSR. The segment at 456–484 is disordered; it reads LRPPKQPHEGSRADLVAEESPELLSPEPR. The chain crosses the membrane as a helical span at residues 496–515; that stretch reads MITLGDGLHNFADGLAVGAA. Zn(2+) contacts are provided by His504, Asn505, and Asp508. At 516–523 the chain is on the extracellular side; the sequence is FASSWKTG. The chain crosses the membrane as a helical span at residues 524–550; that stretch reads LATSLAVFCHEVPHELGDFAALLHAGL. The Zn(2+) site is built by His533, Glu534, and His537. Topologically, residues 551–555 are cytoplasmic; sequence PVSRA. The helical transmembrane segment at 556–576 threads the bilayer; sequence LLLNLASGLTAFAGLYVALAL. Over 577–583 the chain is Extracellular; sequence GVGEESE. The chain crosses the membrane as a helical span at residues 584 to 604; that stretch reads SWTLAVAIGLFLYVALCDMLP. Topologically, residues 605-614 are cytoplasmic; the sequence is AMLNVRDPRP. A helical transmembrane segment spans residues 615–635; it reads WLLFLLHNVGLLGGWAVLLLL. At 636 to 644 the chain is on the extracellular side; sequence SLYEDSIAL.

Belongs to the ZIP transporter (TC 2.A.5) family. As to quaternary structure, homodimer. The extracellular N-terminal ectodomain is cleaved when cells are Zn(2+) deficient, N-terminally cleaved SLC39A4 is internalized at a faster rate. Post-translationally, under excess Zn(2+) conditions, SLC39A4 on the cell surface is rapidly endocytosed, ubiquitinated and degraded. In terms of processing, glycosylated.

Its subcellular location is the cell membrane. It localises to the recycling endosome membrane. It is found in the apical cell membrane. It catalyses the reaction Zn(2+)(in) = Zn(2+)(out). Selective transporter that mediates the uptake of Zn(2+). Plays an essential role for dietary zinc uptake from small intestine. The Zn(2+) uniporter activity is regulated by zinc availability. Also exhibits polyspecific binding and transport of Cu(2+), Cd(2+) and possibly Ni(2+) but at higher concentrations. The chain is Zinc transporter ZIP4 from Pteropus alecto (Black flying fox).